Consider the following 103-residue polypeptide: Large ribosomal subunit protein bL21 (103 aa).

It belongs to the bacterial ribosomal protein bL21 family. Part of the 50S ribosomal subunit. Contacts protein L20.

Functionally, this protein binds to 23S rRNA in the presence of protein L20. The sequence is that of Large ribosomal subunit protein bL21 from Methylibium petroleiphilum (strain ATCC BAA-1232 / LMG 22953 / PM1).